The primary structure comprises 407 residues: BMP-like protein unc-129 (407 aa).

An N-terminal signal peptide occupies residues 1 to 18; that stretch reads MRRLPIVLLLSVFSIANC. Asparagine 27, asparagine 42, and asparagine 211 each carry an N-linked (GlcNAc...) asparagine glycan. The segment at 252–283 is disordered; that stretch reads DDREPIKRKNGKKNSLSEEISSEDVWQGFGEE. The N-linked (GlcNAc...) asparagine glycan is linked to asparagine 395.

It belongs to the TGF-beta family. In terms of assembly, interacts with netrin receptor unc-5; the interaction is direct.

The protein localises to the secreted. It is found in the extracellular space. Required for the migration of axonal growth-cones and distal tip cells (DTC) along the dorsal-ventral axis of the body wall. Acts cell nonautonomously and independently of the classical daf-4, sma-6 or daf-1 TGFbeta receptor signaling. During axon migration, facilitates long-range repulsive guidance of unc-6/netrin by enhancing unc-5-unc-40 signaling at the expense of unc-5 alone signaling, probably through direct interaction with receptor unc-5. Involved in cell-cell contact formation in sensory rays in the developing male tail, via a pathway involving plx-2 and mab-20/semaphorin-2A. This is BMP-like protein unc-129 from Caenorhabditis elegans.